Here is a 612-residue protein sequence, read N- to C-terminus: Probable methyltransferase PMT9 (612 aa).

Residues 1 to 14 (MKHFRTERVRATPK) are Cytoplasmic-facing. The helical; Signal-anchor for type II membrane protein transmembrane segment at 15–35 (LFTYVLVGFIALLGLTCLYYG) threads the bilayer. The Lumenal segment spans residues 36 to 612 (SSFAPGSRKS…LWSLPAISVS (577 aa)). N-linked (GlcNAc...) asparagine glycans are attached at residues Asn107, Asn383, and Asn562.

It belongs to the methyltransferase superfamily.

It is found in the golgi apparatus membrane. The chain is Probable methyltransferase PMT9 from Arabidopsis thaliana (Mouse-ear cress).